The sequence spans 1138 residues: Nuclear pore complex-interacting protein family member B4 (1138 aa).

A helical membrane pass occupies residues 63–87 (VIIAFPTSYKVVITLWIVYLWVSLL). Disordered stretches follow at residues 241-263 (NRMG…SLSL), 291-620 (TPLP…NIKT), and 873-1138 (ERLR…RRLS). The span at 252–262 (QQHSITDNSLS) shows a compositional bias: polar residues. The segment covering 349-359 (PLPPSALPSAP) has biased composition (pro residues). Composition is skewed to basic and acidic residues over residues 406–416 (DNIKTPAERLR), 448–458 (DNIKTPAERLR), 490–500 (DNIKTPAERLR), 532–542 (DNIKTPAERLR), 574–584 (DNIKTPAERLR), 908–918 (DNIKTPAERLR), 950–960 (DNIKTPAERLR), and 992–1002 (DNIKTPAERLR).

It belongs to the NPIP family.

It localises to the membrane. This is Nuclear pore complex-interacting protein family member B4 (NPIPB4) from Homo sapiens (Human).